Here is a 282-residue protein sequence, read N- to C-terminus: CD320 antigen (282 aa).

Positions 1 to 35 (MSGGWMAQVGAWRTGALGLALLLLLGLGLGLEAAA) are cleaved as a signal peptide. The Extracellular segment spans residues 36–229 (SPLSTPTSAQ…GDQSGSPTAY (194 aa)). Residues 53–90 (SCPPTKFQCRTSGLCVPLTWRCDRDLDCSDGSDEEECR) form the LDL-receptor class A 1 domain. Disulfide bonds link Cys-54-Cys-67, Cys-61-Cys-80, and Cys-74-Cys-89. Trp-72, Asp-75, Asp-77, Asp-79, Asp-85, and Glu-86 together coordinate Ca(2+). Asn-126 carries an N-linked (GlcNAc...) asparagine glycan. Residues 131 to 168 (ACLAGELRCTLSDDCIPLTWRCDGHPDCPDSSDELGCG) form the LDL-receptor class A 2 domain. Intrachain disulfides connect Cys-132–Cys-145, Cys-139–Cys-158, and Cys-152–Cys-167. Residues Trp-150, Asp-153, His-155, Asp-157, Asp-163, and Glu-164 each contribute to the Ca(2+) site. Asn-195 and Asn-213 each carry an N-linked (GlcNAc...) asparagine glycan. Positions 199–223 (MGPPVTLESVPSVGNATSSSAGDQS) are disordered. Residues 210–223 (SVGNATSSSAGDQS) are compositionally biased toward polar residues. Residues 230–250 (GVIAAAAVLSASLVTATLLLL) form a helical membrane-spanning segment. At 251 to 282 (SWLRAQERLRPLGLLVAMKESLLLSEQKTSLP) the chain is on the cytoplasmic side.

Interacts (via LDL-receptor class A domains) with TCN2. As to expression, detected in the germinal center (GC) of lymphoid follicles (at protein level). Expressed abundantly on follicular dendritic cells (FDCs).

It is found in the cell membrane. In terms of biological role, receptor for transcobalamin saturated with cobalamin (TCbl). Plays an important role in cobalamin uptake. Plasma membrane protein that is expressed on follicular dendritic cells (FDC) and mediates interaction with germinal center B cells. Functions as costimulator to promote B cell responses to antigenic stimuli; promotes B cell differentiation and proliferation. Germinal center-B (GC-B) cells differentiate into memory B-cells and plasma cells (PC) through interaction with T-cells and follicular dendritic cells (FDC). CD320 augments the proliferation of PC precursors generated by IL-10. This Homo sapiens (Human) protein is CD320 antigen (CD320).